The following is a 457-amino-acid chain: MVAENNKNKDVTLSASMDNNNNNIKGTNIHLEVHQKEPALVKPESETRKGLYFLSNLDQNIAVIVRTIYCFKSEERGNEEAVQVIKKALSQVLVHYYPLAGRLTISPEGKLTVDCTEEGVVFVEAEANCKMDEIGDITKPDPETLGKLVYDVVDAKNILEIPPVTAQVTKFKCGGFVLGLCMNHCMFDGIGAMEFVNSWGQVARGLPLTTPPFSDRTILNARNPPKIENLHQEFEEIEDKSNINSLYTKEPTLYRSFCFDPEKIKKLKLQATENSESLLGNSCTSFEALSAFVWRARTKSLKMLSDQKTKLLFAVDGRAKFEPQLPKGYFGNGIVLTNSICEAGELIEKPLSFAVGLVREAIKMVTDGYMRSAIDYFEVTRARPSLSSTLLITTWSRLGFHTTDFGWGEPILSGPVALPEKEVTLFLSHGEQRRSINVLLGLPATAMDVFQEQFLQI.

Active-site proton acceptor residues include H184 and D404.

Belongs to the plant acyltransferase family. In terms of tissue distribution, expressed in roots, seedlings, leaves, stems, flowers and siliques. Detected at the protein level in roots and in seed coats.

It carries out the reaction 16-hydroxyhexadecanoate + (E)-feruloyl-CoA = 16-feruloyloxyhexadecanoate + CoA. Its function is as follows. Involved in the synthesis of aromatics of the suberin polymer. Specifically affects the accumulation of the ferulate constituent of suberin in roots and seeds, but has no effect on the content of p-coumarate or sinapate. This Arabidopsis thaliana (Mouse-ear cress) protein is Omega-hydroxypalmitate O-feruloyl transferase (HHT1).